The following is a 350-amino-acid chain: MLNNTILHAERELYLTLLAWAQQQPNAYEWLTQLPTWLNDIKDKANYAHAPAYQASVARLPTLTVDNVQLNSDILTIDAQLSDSERKQATALLKQLMPWRKGPFKIGSSQNEGEQAEPIFIDTEWHSDWKWQRVAPHLGNLKGRRVLDVGGGSGYHGWRMAGAGADTVIIIDPSCLFYHQFMAIRHFVGSADAHDIGRYRTHYIPVPLEALPDNSQLFDTVFSMGVLYHRQSPFEHLQQLKGQLVKGGELVLETLVIEGDANTVLVPHDRYAQMNNVYFLPSVAALIGWLEKAGFTEVRCVDVAVTSTDEQRKTEWMNYHSLADFLDPNDPTKTIEGYPAPMRATLIAKK.

Residues Lys-101, Trp-125, Lys-130, Gly-150, Asp-172–Ser-174, Leu-208–Glu-209, Met-224, Tyr-228, and Arg-343 contribute to the carboxy-S-adenosyl-L-methionine site.

Belongs to the class I-like SAM-binding methyltransferase superfamily. CmoB family. In terms of assembly, homotetramer.

It carries out the reaction carboxy-S-adenosyl-L-methionine + 5-hydroxyuridine(34) in tRNA = 5-carboxymethoxyuridine(34) in tRNA + S-adenosyl-L-homocysteine + H(+). Its function is as follows. Catalyzes carboxymethyl transfer from carboxy-S-adenosyl-L-methionine (Cx-SAM) to 5-hydroxyuridine (ho5U) to form 5-carboxymethoxyuridine (cmo5U) at position 34 in tRNAs. The sequence is that of tRNA U34 carboxymethyltransferase from Psychrobacter arcticus (strain DSM 17307 / VKM B-2377 / 273-4).